A 602-amino-acid chain; its full sequence is ATP-dependent lipid A-core flippase 1 (602 aa).

The next 5 membrane-spanning stretches (helical) occupy residues 36–56 (LGFV…VYFL), 80–100 (LFII…NYCL), 154–174 (ILTI…MFYY), 176–196 (WQLS…VSVV), and 261–281 (ASVP…FYAI). The 283-residue stretch at 39 to 321 (VAAIIGMLGY…LTNVNSEFQQ (283 aa)) folds into the ABC transmembrane type-1 domain. An ABC transporter domain is found at 362–599 (YKNTNTMTTS…QGAYAQLHSF (238 aa)). Residue 398 to 405 (GRSGSGKS) participates in ATP binding.

This sequence belongs to the ABC transporter superfamily. Lipid exporter (TC 3.A.1.106) family. In terms of assembly, homodimer.

Its subcellular location is the cell inner membrane. It catalyses the reaction ATP + H2O + lipid A-core oligosaccharideSide 1 = ADP + phosphate + lipid A-core oligosaccharideSide 2.. Functionally, involved in lipopolysaccharide (LPS) biosynthesis. Translocates lipid A-core from the inner to the outer leaflet of the inner membrane. Transmembrane domains (TMD) form a pore in the inner membrane and the ATP-binding domain (NBD) is responsible for energy generation. This Colwellia psychrerythraea (strain 34H / ATCC BAA-681) (Vibrio psychroerythus) protein is ATP-dependent lipid A-core flippase 1.